The sequence spans 165 residues: Mid1-interacting protein 1-like (165 aa).

A disordered region spans residues aspartate 46–asparagine 67.

This sequence belongs to the SPOT14 family.

It is found in the nucleus. Its subcellular location is the cytoplasm. The protein resides in the cytoskeleton. Functionally, involved in stabilization of microtubules. May play a role in the regulation of lipogenesis. The polypeptide is Mid1-interacting protein 1-like (Danio rerio (Zebrafish)).